A 245-amino-acid chain; its full sequence is Carbohydrate deacetylase (245 aa).

Residues H59 and H125 each coordinate Mg(2+).

It belongs to the YdjC deacetylase family. In terms of assembly, homodimer. It depends on Mg(2+) as a cofactor.

In terms of biological role, probably catalyzes the deacetylation of acetylated carbohydrates an important step in the degradation of oligosaccharides. The sequence is that of Carbohydrate deacetylase from Listeria welshimeri serovar 6b (strain ATCC 35897 / DSM 20650 / CCUG 15529 / CIP 8149 / NCTC 11857 / SLCC 5334 / V8).